The following is a 235-amino-acid chain: Elongation factor Tu (235 aa).

The region spanning 1–125 is the tr-type G domain; that stretch reads KNMITGAAQM…EVDEYIPTPE (125 aa). Position 47–50 (47–50) interacts with GTP; that stretch reads NKED.

Belongs to the TRAFAC class translation factor GTPase superfamily. Classic translation factor GTPase family. EF-Tu/EF-1A subfamily. As to quaternary structure, monomer.

It localises to the cytoplasm. It carries out the reaction GTP + H2O = GDP + phosphate + H(+). Its function is as follows. GTP hydrolase that promotes the GTP-dependent binding of aminoacyl-tRNA to the A-site of ribosomes during protein biosynthesis. The protein is Elongation factor Tu (tufA) of Gloeothece membranacea (strain PCC 6501 / SAG 26.84).